Here is a 683-residue protein sequence, read N- to C-terminus: DNA ligase (683 aa).

Residues 35-39 (DTEYD), 84-85 (SL), and Glu-116 contribute to the NAD(+) site. The active-site N6-AMP-lysine intermediate is the Lys-118. The NAD(+) site is built by Arg-139, Glu-176, Lys-293, and Lys-317. Residues Cys-419, Cys-422, Cys-437, and Cys-443 each contribute to the Zn(2+) site. The region spanning 602–683 (AGPQLLAGKT…LMKLLAKGVE (82 aa)) is the BRCT domain.

It belongs to the NAD-dependent DNA ligase family. LigA subfamily. Requires Mg(2+) as cofactor. Mn(2+) is required as a cofactor.

It catalyses the reaction NAD(+) + (deoxyribonucleotide)n-3'-hydroxyl + 5'-phospho-(deoxyribonucleotide)m = (deoxyribonucleotide)n+m + AMP + beta-nicotinamide D-nucleotide.. DNA ligase that catalyzes the formation of phosphodiester linkages between 5'-phosphoryl and 3'-hydroxyl groups in double-stranded DNA using NAD as a coenzyme and as the energy source for the reaction. It is essential for DNA replication and repair of damaged DNA. In Dechloromonas aromatica (strain RCB), this protein is DNA ligase.